Reading from the N-terminus, the 481-residue chain is 3-isopropylmalate dehydratase large subunit (481 aa).

[4Fe-4S] cluster-binding residues include Cys-363, Cys-423, and Cys-426. The tract at residues 432–459 is disordered; the sequence is DQLKPGERSASTSNRNFEGRQGPGGRTH.

Belongs to the aconitase/IPM isomerase family. LeuC type 1 subfamily. Heterodimer of LeuC and LeuD. The cofactor is [4Fe-4S] cluster.

The enzyme catalyses (2R,3S)-3-isopropylmalate = (2S)-2-isopropylmalate. The protein operates within amino-acid biosynthesis; L-leucine biosynthesis; L-leucine from 3-methyl-2-oxobutanoate: step 2/4. Its function is as follows. Catalyzes the isomerization between 2-isopropylmalate and 3-isopropylmalate, via the formation of 2-isopropylmaleate. This is 3-isopropylmalate dehydratase large subunit from Corynebacterium glutamicum (strain R).